The primary structure comprises 101 residues: Small ribosomal subunit protein uS14 (101 aa).

It belongs to the universal ribosomal protein uS14 family. In terms of assembly, part of the 30S ribosomal subunit. Contacts proteins S3 and S10.

In terms of biological role, binds 16S rRNA, required for the assembly of 30S particles and may also be responsible for determining the conformation of the 16S rRNA at the A site. This chain is Small ribosomal subunit protein uS14, found in Ruthia magnifica subsp. Calyptogena magnifica.